Here is a 160-residue protein sequence, read N- to C-terminus: Large ribosomal subunit protein uL15 (160 aa).

Over residues 1-14 (MKLNDISDNPGSSK) the composition is skewed to polar residues. The interval 1 to 35 (MKLNDISDNPGSSKSRMRVGRGIGSGKGKTCGRGV) is disordered. A compositionally biased stretch (gly residues) spans 21 to 35 (RGIGSGKGKTCGRGV).

This sequence belongs to the universal ribosomal protein uL15 family. Part of the 50S ribosomal subunit.

Its function is as follows. Binds to the 23S rRNA. This is Large ribosomal subunit protein uL15 from Beijerinckia indica subsp. indica (strain ATCC 9039 / DSM 1715 / NCIMB 8712).